The following is a 138-amino-acid chain: Putative pre-16S rRNA nuclease (138 aa).

The protein belongs to the YqgF nuclease family.

The protein localises to the cytoplasm. Could be a nuclease involved in processing of the 5'-end of pre-16S rRNA. The chain is Putative pre-16S rRNA nuclease from Bacillus pumilus (strain SAFR-032).